The primary structure comprises 340 residues: Erlin-2 (340 aa).

Residues 1–3 (MAQ) lie on the Cytoplasmic side of the membrane. A helical transmembrane segment spans residues 4–24 (LGAVVAVASSFFCASLFSAVH). The Lumenal segment spans residues 25-340 (KIEEGHIGVY…EPLEAPTKEN (316 aa)). N106 carries N-linked (GlcNAc...) asparagine glycosylation. Residues 177-309 (EAIRRNYELM…DIPNMFMDSA (133 aa)) form an interaction with ERLIN1 region. The residue at position 267 (K267) is an N6-acetyllysine.

Belongs to the band 7/mec-2 family. As to quaternary structure, forms a heteromeric complex with ERLIN1. In complex with ERLIN1, interacts with RNF170. Interacts with activated ITPR1, independently of the degree of ITPR1 polyubiquitination. Interacts with SCAP, INSIG1, SREBF1 and SREBF2 under cholesterol sufficiency conditions; indicative for an association with the SCAP-SREBP-INSIG complex. Probably part of an AMFR/gp78 and INSIG1-containing ubiquitin ligase complex involved in ERAD of HMGCR. Interacts with TMUB1; TMUB1 bridges the association with AMFR. Interacts with SYVN1 and RNF139. Interacts with TMEM259. Interacts with TMEM41B. In terms of processing, deubiquitinated by USP25; leading to stabilization.

It localises to the endoplasmic reticulum membrane. In terms of biological role, component of the ERLIN1/ERLIN2 complex which mediates the endoplasmic reticulum-associated degradation (ERAD) of inositol 1,4,5-trisphosphate receptors (IP3Rs) such as ITPR1. Promotes sterol-accelerated ERAD of HMGCR probably implicating an AMFR/gp78-containing ubiquitin ligase complex. Involved in regulation of cellular cholesterol homeostasis by regulation the SREBP signaling pathway. May promote ER retention of the SCAP-SREBF complex. This is Erlin-2 (Erlin2) from Mus musculus (Mouse).